We begin with the raw amino-acid sequence, 256 residues long: MGYLKRIGMCISLLIVIIFVTSCGGGNKITGDSKETQIKKSFAKTLDMYPIKNLEDLYDKEGYRDGEFEKGDKGMWTIYTDFAKSNKSDELDDEGMVLNLDRNTRTAKGYYFVKKFYEKDKFSDRKNYKVEMKNNKIILLDKVNDPNLKERIENFKFFGQYANFKDLENYNNGDVSINWNVPSYDVEYKMSNKDENVKQLRSRYNIPTDKAPMLKMHIDGDLKGSSVGYKRLEIDFSKEDRDISVIDYLSYKPAKK.

A signal peptide spans 1–22 (MGYLKRIGMCISLLIVIIFVTS). Cys23 carries the N-palmitoyl cysteine lipid modification. Cys23 carries the S-diacylglycerol cysteine lipid modification.

The protein belongs to the staphylococcal tandem lipoprotein family.

The protein resides in the cell membrane. This is an uncharacterized protein from Staphylococcus aureus (strain MRSA252).